The following is a 241-amino-acid chain: Fatty acid metabolism regulator protein (241 aa).

The 69-residue stretch at 11 to 79 (QSPAALAEEY…HGKPTKVNNI (69 aa)) folds into the HTH gntR-type domain. The H-T-H motif DNA-binding region spans 39-58 (ERDLADKIGVTRTTLREVLQ).

In terms of assembly, homodimer.

It is found in the cytoplasm. Multifunctional regulator of fatty acid metabolism. This chain is Fatty acid metabolism regulator protein, found in Haemophilus influenzae (strain 86-028NP).